We begin with the raw amino-acid sequence, 212 residues long: Glutathione S-transferase hmp2 (212 aa).

Residues 1 to 80 (MVIKLYGSAM…YLARKYDSGT (80 aa)) enclose the GST N-terminal domain. Glutathione contacts are provided by residues 51–52 (KV) and 64–65 (ES). A GST C-terminal domain is found at 88 to 212 (DHEAYGRFEQ…TWIKATAEAR (125 aa)).

It belongs to the GST superfamily.

The enzyme catalyses RX + glutathione = an S-substituted glutathione + a halide anion + H(+). Its pathway is secondary metabolite biosynthesis. Glutathione S-transferase; part of the gene cluster that mediates the biosynthesis of hypothemycin, a resorcylic acid lactone (RAL) that irreversibly inhibits a subset of protein kinases with a conserved cysteine in the ATP binding site such as human ERK2. The first step is performed by both PKSs hmp3 and hmp8 and leads to the production of 7',8'-dehydrozearalenol (DHZ). The highly reducing PKS hpm8 synthesizes the reduced hexaketide (7S,11S,2E,8E)-7,11-dihydroxy-dodeca-2,8-dienoate, which is transferred downstream to the non-reducing PKS hpm3. Hpm3 then extends the reduced hexaketide to a nonaketide, after which regioselective cyclization and macrolactonization affords DHZ. The next step is the conversion of DHZ into aigialomycin C and is performed by the O-methyltransferase hmp5, the FAD-binding monooxygenase hmp7, and the cytochrome P450 monooxygenase hmp1. The wide substrate tolerance of the hmp5 and hmp7 implies that the reactions from DHZ to aigialomycin C can occur in any order. The steps from aigialomycin C to hypothemycin are less well established. The FAD-linked oxidoreductase hmp9 presumably catalyzes oxidation of the C-6' hydroxyl to a ketone. The timing of this oxidation is important, since the resulting enone functional group is a Michael acceptor that can react spontaneously with glutathione, an abundant metabolite in fungal cells. The glutathione S-transferase hmp2 catalyzes cis-trans isomerization of the 7',8' double bond with equilibrium favoring the trans isomer. The hpm6-encoded transporter might preferentially pump hypothemycin out of the cell relative to the trans isomer aigialomycin A. The cis-to-trans isomerization may be coupled with C-4' hydroxylation, since all known hypothemycin analogs containing the enone functional group also have hydroxyl groups at both C-4' and C-5'. In Hypomyces subiculosus (Nectria subiculosa), this protein is Glutathione S-transferase hmp2.